The chain runs to 441 residues: Glutamyl-tRNA reductase (441 aa).

Residues 49–52, Ser-109, 114–116, and Gln-120 each bind substrate; these read TCNR and EDQ. Cys-50 serves as the catalytic Nucleophile. 190–195 lines the NADP(+) pocket; sequence GAGKMS.

Belongs to the glutamyl-tRNA reductase family. As to quaternary structure, homodimer.

The enzyme catalyses (S)-4-amino-5-oxopentanoate + tRNA(Glu) + NADP(+) = L-glutamyl-tRNA(Glu) + NADPH + H(+). It functions in the pathway porphyrin-containing compound metabolism; protoporphyrin-IX biosynthesis; 5-aminolevulinate from L-glutamyl-tRNA(Glu): step 1/2. In terms of biological role, catalyzes the NADPH-dependent reduction of glutamyl-tRNA(Glu) to glutamate 1-semialdehyde (GSA). The sequence is that of Glutamyl-tRNA reductase from Moorella thermoacetica (strain ATCC 39073 / JCM 9320).